The sequence spans 37 residues: Potassium channel toxin alpha-KTx 15.3 (37 aa).

A Pyrrolidone carboxylic acid modification is found at Gln-1. 3 disulfide bridges follow: Cys-8–Cys-28, Cys-13–Cys-33, and Cys-17–Cys-35.

In terms of tissue distribution, expressed by the venom gland.

It localises to the secreted. Its function is as follows. Inhibits A-type (Kv4) voltage-gated potassium channels of striated neurons (Ki=131 nM), probably by acting as a pore blocker. Has also been shown to block ERG1/Kv11.1/KCNH2 potassium channels (IC(50)=7.9 uM). The presence of the Kv4-associated proteins DPP6 or DPP10 is mandatory to have high-affinity blockade of Kv4.2/KCND2 and Kv4.3/KCND3 channels (80-90% inhibition at 500 nM of toxin). In contrast, the presence of the Kv4-associated protein KChIP1/KCNIP1 does not enhance the affinity blockade (only 40% inhibition at 500 nM). In adult rat brain, the toxin binds to sites in the striatum, and cerebellum. It shares the same target in rat brain than AaTX1 (AC Q867F4) and BmTX3 (AC Q8I0L5). In DPP6 knockout mice, A-type currents are about 20-fold less affected by the toxin. In rodent models of Parkinson's disease, the toxin reduces motor symptoms and emotional and cognitive symptoms. The polypeptide is Potassium channel toxin alpha-KTx 15.3 (Androctonus mauritanicus mauritanicus (Scorpion)).